The following is a 307-amino-acid chain: Pantothenate kinase (307 aa).

90–97 (GSVAVGKS) lines the ATP pocket.

The protein belongs to the prokaryotic pantothenate kinase family.

Its subcellular location is the cytoplasm. It carries out the reaction (R)-pantothenate + ATP = (R)-4'-phosphopantothenate + ADP + H(+). Its pathway is cofactor biosynthesis; coenzyme A biosynthesis; CoA from (R)-pantothenate: step 1/5. This chain is Pantothenate kinase, found in Levilactobacillus brevis (strain ATCC 367 / BCRC 12310 / CIP 105137 / JCM 1170 / LMG 11437 / NCIMB 947 / NCTC 947) (Lactobacillus brevis).